The following is a 95-amino-acid chain: Signal recognition particle 19 kDa protein (95 aa).

It belongs to the SRP19 family. Part of the signal recognition particle protein translocation system, which is composed of SRP and FtsY. Archaeal SRP consists of a 7S RNA molecule of 300 nucleotides and two protein subunits: SRP54 and SRP19.

The protein resides in the cytoplasm. Its function is as follows. Involved in targeting and insertion of nascent membrane proteins into the cytoplasmic membrane. Binds directly to 7S RNA and mediates binding of the 54 kDa subunit of the SRP. The protein is Signal recognition particle 19 kDa protein of Pyrobaculum islandicum (strain DSM 4184 / JCM 9189 / GEO3).